A 142-amino-acid polypeptide reads, in one-letter code: Transcriptional regulator MraZ (142 aa).

SpoVT-AbrB domains lie at 5–47 (EYQH…TINE) and 76–119 (ACIV…SREK).

It belongs to the MraZ family. Forms oligomers.

Its subcellular location is the cytoplasm. The protein localises to the nucleoid. The polypeptide is Transcriptional regulator MraZ (Clostridium botulinum (strain Alaska E43 / Type E3)).